The following is a 227-amino-acid chain: Ras-related protein Rab-3C (227 aa).

9 residues coordinate GTP: Ser39, Gly42, Lys43, Thr44, Ser45, Thr56, Ser57, Ser61, and Thr62. Mg(2+) is bound at residue Thr44. A Switch 1 motif is present at residues 53-66 (DSFTSAFVSTVGID). Mg(2+)-binding residues include Thr62 and Asp85. Thr86 is subject to Phosphothreonine; by LRRK2. The short motif at 86–104 (TAGQERYRTITTAYYRGAM) is the Switch 2 element. GTP is bound by residues Gly88, Asn143, Lys144, Asp146, Ala174, and Lys175. A phosphoserine mark is found at Ser196 and Ser198. Positions 202-227 (DPAITAAKQSTRLKETPPPPQPNCGC) are disordered. Residue Thr206 is modified to Phosphothreonine. Over residues 217–227 (TPPPPQPNCGC) the composition is skewed to pro residues. Residues Cys225 and Cys227 are each lipidated (S-geranylgeranyl cysteine). Cys227 is modified (cysteine methyl ester).

The protein belongs to the small GTPase superfamily. Rab family. Interacts with RIMS1, RIMS2, RPH3A and RPH3AL. Interacts with GDI2, CHM and CHML; phosphorylation at Thr-86 disrupts these interactions. Interacts with MADD (via uDENN domain); the GTP-bound form is preferred for interaction. The cofactor is Mg(2+). Post-translationally, phosphorylation of Thr-86 in the switch II region by LRRK2 prevents the association of RAB regulatory proteins, including CHM, CHML and RAB GDP dissociation inhibitor GDI2.

It is found in the cell membrane. It carries out the reaction GTP + H2O = GDP + phosphate + H(+). With respect to regulation, regulated by guanine nucleotide exchange factors (GEFs) which promote the exchange of bound GDP for free GTP. Regulated by GTPase activating proteins (GAPs) which increase the GTP hydrolysis activity. Inhibited by GDP dissociation inhibitors (GDIs) which prevent Rab-GDP dissociation. Its function is as follows. The small GTPases Rab are key regulators of intracellular membrane trafficking, from the formation of transport vesicles to their fusion with membranes. Rabs cycle between an inactive GDP-bound form and an active GTP-bound form that is able to recruit to membranes different sets of downstream effectors directly responsible for vesicle formation, movement, tethering and fusion. This chain is Ras-related protein Rab-3C, found in Mus musculus (Mouse).